A 282-amino-acid polypeptide reads, in one-letter code: Putative hydrolase Bcen_5340 (282 aa).

E124, E126, and D155 together coordinate Mg(2+).

This sequence belongs to the FAH family. Requires Mg(2+) as cofactor.

The chain is Putative hydrolase Bcen_5340 from Burkholderia orbicola (strain AU 1054).